We begin with the raw amino-acid sequence, 129 residues long: Small ribosomal subunit protein uS11 (129 aa).

Part of the 30S ribosomal subunit. Interacts with proteins S7 and S18. Binds to IF-3. In terms of processing, may be methylated on an undetermined residue.

In terms of biological role, located on the platform of the 30S subunit, it bridges several disparate RNA helices of the 16S rRNA. Forms part of the Shine-Dalgarno cleft in the 70S ribosome. The protein is Small ribosomal subunit protein uS11 of Rhodopseudomonas palustris (strain ATCC BAA-98 / CGA009).